Consider the following 608-residue polypeptide: Albumin (608 aa).

Residues 1–18 (MKWVTFLLLLFVSDSAFS) form the signal peptide. Positions 19-24 (RGLFRR) are excised as a propeptide. Albumin domains lie at 19–211 (RGLF…ALKE), 212–403 (KALA…EFQP), and 404–601 (LVEE…KLVA). Histidine 27 lines the Cu cation pocket. Serine 29 carries the phosphoserine modification. Ca(2+)-binding residues include glutamate 30 and aspartate 37. Cysteine 77 and cysteine 86 are disulfide-bonded. Serine 82 and serine 89 each carry phosphoserine. Histidine 91 is a Zn(2+) binding site. Disulfide bonds link cysteine 99/cysteine 115, cysteine 114/cysteine 125, cysteine 148/cysteine 193, cysteine 192/cysteine 201, cysteine 224/cysteine 270, and cysteine 269/cysteine 277. Glutamate 268 contributes to the Ca(2+) binding site. Histidine 271 and aspartate 273 together coordinate Zn(2+). 3 residues coordinate Ca(2+): aspartate 273, glutamate 276, and aspartate 279. 8 cysteine pairs are disulfide-bonded: cysteine 289/cysteine 303, cysteine 302/cysteine 313, cysteine 340/cysteine 385, cysteine 384/cysteine 393, cysteine 416/cysteine 462, cysteine 461/cysteine 472, cysteine 485/cysteine 501, and cysteine 500/cysteine 511. Phosphoserine is present on serine 297. Serine 443 bears the Phosphoserine mark. A phosphothreonine mark is found at threonine 444 and threonine 446. At lysine 460 the chain carries N6-succinyllysine. Serine 513 is subject to Phosphoserine. Disulfide bonds link cysteine 538–cysteine 583 and cysteine 582–cysteine 591. At lysine 543 the chain carries N6-succinyllysine. An N6-methyllysine modification is found at lysine 558. Position 570 is a phosphothreonine (threonine 570). An N6-succinyllysine modification is found at lysine 588.

The protein belongs to the ALB/AFP/VDB family. In terms of assembly, interacts with FCGRT; this interaction regulates ALB homeostasis. Interacts with TASOR. In plasma, occurs in a covalently-linked complex with chromophore-bound alpha-1-microglobulin; this interaction does not prevent fatty acid binding to ALB. In terms of tissue distribution, plasma.

It localises to the secreted. In terms of biological role, binds water, Ca(2+), Na(+), K(+), fatty acids, hormones, bilirubin and drugs. Its main function is the regulation of the colloidal osmotic pressure of blood. Major zinc transporter in plasma, typically binds about 80% of all plasma zinc. Major calcium and magnesium transporter in plasma, binds approximately 45% of circulating calcium and magnesium in plasma. Potentially has more than two calcium-binding sites and might additionally bind calcium in a non-specific manner. The shared binding site between zinc and calcium at residue Asp-273 suggests a crosstalk between zinc and calcium transport in the blood. The rank order of affinity is zinc &gt; calcium &gt; magnesium. Binds to the bacterial siderophore enterobactin and inhibits enterobactin-mediated iron uptake of E.coli from ferric transferrin, and may thereby limit the utilization of iron and growth of enteric bacteria such as E.coli. Does not prevent iron uptake by the bacterial siderophore aerobactin. The chain is Albumin from Mesocricetus auratus (Golden hamster).